Here is a 709-residue protein sequence, read N- to C-terminus: Nucleobase-ascorbate transporter 12 (709 aa).

Positions M1–G145 are disordered. Residues K7–P19 show a composition bias toward pro residues. Residue S40 is modified to Phosphoserine. Residues G41–L53 are compositionally biased toward polar residues. Basic and acidic residues-rich tracts occupy residues E89–P98 and Q113–D122. The next 12 membrane-spanning stretches (helical) occupy residues Y190–G210, V218–S238, L240–S260, I283–L303, P308–P328, L329–L349, I361–L381, W438–A458, G530–I550, P551–L571, I585–Y605, and Y639–L659.

It belongs to the nucleobase:cation symporter-2 (NCS2) (TC 2.A.40) family. As to expression, ubiquitous.

It localises to the cell membrane. This chain is Nucleobase-ascorbate transporter 12 (NAT12), found in Arabidopsis thaliana (Mouse-ear cress).